The primary structure comprises 151 residues: Major curlin subunit (151 aa).

A signal peptide spans 1 to 20 (MKLLKVAAIAAIVFSGSALA). The segment at 71–90 (TQHGGGNGADVGQGSDDSSI) is disordered.

It belongs to the CsgA/CsgB family.

The protein localises to the fimbrium. Curlin is the structural subunit of the curli fimbriae. Curli are coiled surface structures that assemble preferentially at growth temperatures below 37 degrees Celsius. Curli can bind to fibronectin. The chain is Major curlin subunit (csgA) from Escherichia coli (strain K12).